Here is a 138-residue protein sequence, read N- to C-terminus: Translation initiation factor 2 subunit beta (138 aa).

This sequence belongs to the eIF-2-beta/eIF-5 family. Heterotrimer composed of an alpha, a beta and a gamma chain.

Its function is as follows. eIF-2 functions in the early steps of protein synthesis by forming a ternary complex with GTP and initiator tRNA. The chain is Translation initiation factor 2 subunit beta from Methanococcus vannielii (strain ATCC 35089 / DSM 1224 / JCM 13029 / OCM 148 / SB).